The chain runs to 538 residues: MARKGNPISVRLDLNRSSDPSRFSDYYYGKSLYQDVNLRSYFSSIRPPTILTFGFRLGRCIILHFPKRTFIHFFLPRRPLRLKRRDKSRPGKDKGRWWAFGKVGPIGCLHSSEGTEEERNEVRGRGAGKRVESIDREKQNEIRIWPKKMQRYGYHDRSPSRKKNFSKSLRVSGAFKHPKYAGVVNDIAFLIENDGPTSHLLKRTLPAVRPSLNYSVMQYFFNTKNKMHFDPVVVLNHFVAPGVAEPSTMGGAKGGSLDKRIRSRIAFFVESSTSEKKCLARAKKRLIHFIRQANDLRFAGTTKTTISLFPFFGATFFFPRDGVGVYNNPFFEYAREQLLGQLRIKCRNLMGKDKVMELIEKFIYLGRIGKLIKGIEMMIEIILRKRIIPYGYNSYLNEVQKMRSFLSNRTNTNTLIESVKIKSVYQSASLIAQDISFQLGNNPISFRSIFSQIVKDIPLIMPKGVEGIRICCSGRLGGAEIARTECGKYGKTSCNVFNQKIDYALAEVSTRNGISGVKVRISYSQNKKGRAISETYEI.

The interval 111 to 134 is disordered; it reads SSEGTEEERNEVRGRGAGKRVESI. Over residues 120–134 the composition is skewed to basic and acidic residues; the sequence is NEVRGRGAGKRVESI.

Belongs to the universal ribosomal protein uS3 family.

Its subcellular location is the mitochondrion. This chain is Small ribosomal subunit protein uS3m (RPS3), found in Oryza sativa subsp. japonica (Rice).